Consider the following 471-residue polypeptide: 1,3-beta-glucanosyltransferase GAS4 (471 aa).

A signal peptide spans 1–21 (MMVFSSTFIFLILELVVLCEA). Cys-70 and Cys-99 form a disulfide bridge. Tyr-88 serves as a coordination point for (1,3-beta-D-glucosyl)n. Asn-151 carries N-linked (GlcNAc...) asparagine glycosylation. Positions 160, 161, 203, and 208 each coordinate (1,3-beta-D-glucosyl)n. Glu-161 (proton donor) is an active-site residue. Disulfide bonds link Cys-217–Cys-354 and Cys-238–Cys-269. Catalysis depends on Glu-266, which acts as the Nucleophile. Tyr-298 is a binding site for (1,3-beta-D-glucosyl)n. Residue Asn-398 is glycosylated (N-linked (GlcNAc...) asparagine). The GPI-anchor amidated asparagine moiety is linked to residue Asn-447. Residues 448-471 (SASISGPLLPLGLCLLFFTFSLFF) constitute a propeptide, removed in mature form.

It belongs to the glycosyl hydrolase 72 family.

It is found in the cell membrane. Splits internally a 1,3-beta-glucan molecule and transfers the newly generated reducing end (the donor) to the non-reducing end of another 1,3-beta-glucan molecule (the acceptor) forming a 1,3-beta linkage, resulting in the elongation of 1,3-beta-glucan chains in the cell wall. Involved in spore wall assembly. The protein is 1,3-beta-glucanosyltransferase GAS4 (GAS4) of Saccharomyces cerevisiae (strain ATCC 204508 / S288c) (Baker's yeast).